The following is a 371-amino-acid chain: tRNA-specific 2-thiouridylase MnmA (371 aa).

ATP-binding positions include 12–19 (GMSGGVDS) and methionine 38. The tract at residues 98-100 (NPD) is interaction with target base in tRNA. Cysteine 103 acts as the Nucleophile in catalysis. Cysteine 103 and cysteine 200 are joined by a disulfide. Glycine 128 contributes to the ATP binding site. The tract at residues 150–152 (KDQ) is interaction with tRNA. The active-site Cysteine persulfide intermediate is cysteine 200. The segment at 312–313 (RY) is interaction with tRNA.

The protein belongs to the MnmA/TRMU family. In terms of assembly, interacts with TusE.

It localises to the cytoplasm. The enzyme catalyses S-sulfanyl-L-cysteinyl-[protein] + uridine(34) in tRNA + AH2 + ATP = 2-thiouridine(34) in tRNA + L-cysteinyl-[protein] + A + AMP + diphosphate + H(+). Its function is as follows. Catalyzes the 2-thiolation of uridine at the wobble position (U34) of tRNA(Lys), tRNA(Glu) and tRNA(Gln), leading to the formation of s(2)U34, the first step of tRNA-mnm(5)s(2)U34 synthesis. Sulfur is provided by IscS, via a sulfur-relay system. Binds ATP and its substrate tRNAs. This Yersinia pseudotuberculosis serotype O:1b (strain IP 31758) protein is tRNA-specific 2-thiouridylase MnmA.